The following is a 144-amino-acid chain: Large ribosomal subunit protein uL11 (144 aa).

The protein belongs to the universal ribosomal protein uL11 family. Part of the ribosomal stalk of the 50S ribosomal subunit. Interacts with L10 and the large rRNA to form the base of the stalk. L10 forms an elongated spine to which L12 dimers bind in a sequential fashion forming a multimeric L10(L12)X complex. One or more lysine residues are methylated.

Forms part of the ribosomal stalk which helps the ribosome interact with GTP-bound translation factors. The chain is Large ribosomal subunit protein uL11 from Streptomyces avermitilis (strain ATCC 31267 / DSM 46492 / JCM 5070 / NBRC 14893 / NCIMB 12804 / NRRL 8165 / MA-4680).